Consider the following 346-residue polypeptide: Methylthioribose-1-phosphate isomerase (346 aa).

Residues 46–48 (RGA), Arg89, and Gln196 contribute to the substrate site. Residue Asp237 is the Proton donor of the active site. 247 to 248 (NK) contributes to the substrate binding site.

This sequence belongs to the eIF-2B alpha/beta/delta subunits family. MtnA subfamily.

It carries out the reaction 5-(methylsulfanyl)-alpha-D-ribose 1-phosphate = 5-(methylsulfanyl)-D-ribulose 1-phosphate. It functions in the pathway amino-acid biosynthesis; L-methionine biosynthesis via salvage pathway; L-methionine from S-methyl-5-thio-alpha-D-ribose 1-phosphate: step 1/6. Catalyzes the interconversion of methylthioribose-1-phosphate (MTR-1-P) into methylthioribulose-1-phosphate (MTRu-1-P). In Geotalea daltonii (strain DSM 22248 / JCM 15807 / FRC-32) (Geobacter daltonii), this protein is Methylthioribose-1-phosphate isomerase.